Consider the following 3387-residue polypeptide: Genome polyprotein (3387 aa).

Residues 1–100 lie on the Cytoplasmic side of the membrane; that stretch reads MNQRKKVVRP…LNILNGRKRS (100 aa). The interval 36 to 71 is hydrophobic; homodimerization of capsid protein C; that stretch reads LFSGKGPLRMVLAFITFLRVLSIPPTAGILKRWGQL. Residues 100-113 constitute a propeptide, ER anchor for the capsid protein C, removed in mature form by serine protease NS3; the sequence is STVTLLCLIPTVMA. A helical membrane pass occupies residues 101–117; sequence TVTLLCLIPTVMAFHLS. Topologically, residues 118–237 are extracellular; that stretch reads TRDGEPLMIV…GAWKHAQRVE (120 aa). Residue N182 is glycosylated (N-linked (GlcNAc...) asparagine; by host). A helical transmembrane segment spans residues 238–258; sequence SWILRNPGFALLAGFMAYMIG. Residues 259 to 265 are Cytoplasmic-facing; that stretch reads QTGIQRT. Residues 266 to 279 form a helical membrane-spanning segment; sequence VFFVLMMLVAPSYG. At 280–725 the chain is on the extracellular side; sequence MRCIGVGNRD…HQVFGSVYTT (446 aa). 4 disulfide bridges follow: C282-C309, C339-C400, C353-C384, and C371-C395. Residue N346 is glycosylated (N-linked (GlcNAc...) asparagine; by host). Residues 377 to 390 form a fusion peptide region; the sequence is DRGWGNGCGLFGKG. N432 carries an N-linked (GlcNAc...) asparagine; by host glycan. Intrachain disulfides connect C464–C564 and C581–C612. The chain crosses the membrane as a helical span at residues 726 to 746; the sequence is MFGGVSWMVRILIGLLVLWIG. At 747–751 the chain is on the cytoplasmic side; the sequence is TNSRN. Residues 752 to 772 traverse the membrane as a helical segment; the sequence is TPMAMTCIAVGGITLFLGFTV. At 773–1193 the chain is on the extracellular side; that stretch reads QADMGCVVSW…IMLGDTMLSR (421 aa). Intrachain disulfides connect C778-C789, C829-C917, C953-C997, C1054-C1103, C1065-C1087, and C1086-C1090. Residues N904 and N981 are each glycosylated (N-linked (GlcNAc...) asparagine; by host). A helical transmembrane segment spans residues 1194–1218; it reads VGGQTHLAIMIVFKMSPGYVLGVFL. At 1219 to 1224 the chain is on the lumenal side; sequence RKLTSR. The chain crosses the membrane as a helical span at residues 1225–1243; that stretch reads ETALMVIGMAMTTVFSIPH. Residues 1244-1267 lie on the Cytoplasmic side of the membrane; that stretch reads DLMELIDGISLGLILLKMVTHFDN. A helical membrane pass occupies residues 1268–1288; the sequence is TQVGTLALSLTFIRSTMPLTM. Residue A1289 is a topological domain, lumenal. The chain crosses the membrane as a helical span at residues 1290-1308; that stretch reads WRTIMAVLFAVTLIPLCRT. Topologically, residues 1309-1316 are lumenal; the sequence is SCLQKQSH. A helical membrane pass occupies residues 1317–1337; the sequence is WVEITAIILGAQALPVYLMTL. Over 1338-1345 the chain is Cytoplasmic; it reads MKGASKRS. A helical transmembrane segment spans residues 1346-1366; the sequence is WPLNEGIMAVGLVSLLGSALL. The Lumenal segment spans residues 1367-1369; it reads KND. A helical transmembrane segment spans residues 1370-1390; that stretch reads VPLAGPMVAGGLLLAAYVMSG. The Cytoplasmic portion of the chain corresponds to 1391 to 1444; the sequence is SSADLSLERAANVQWDEMADITGSSPIIEVKQDEDGSFSIRDVEETNMITLLVK. The interval 1397 to 1436 is interacts with and activates NS3 protease; that stretch reads LERAANVQWDEMADITGSSPIIEVKQDEDGSFSIRDVEET. The helical intramembrane region spans 1445 to 1465; it reads LALITVSGLYPLAIPITMTLW. At 1466–2146 the chain is on the cytoplasmic side; sequence YMWQVRTQRS…LNELPESLET (681 aa). The 178-residue stretch at 1475–1652 folds into the Peptidase S7 domain; it reads SGALWDVPSP…ERIGEPDYEV (178 aa). Catalysis depends on charge relay system; for serine protease NS3 activity residues H1525, D1549, and S1609. Residues 1654–1810 form the Helicase ATP-binding domain; that stretch reads EDIFRKKRLT…QSNSPIEDIE (157 aa). The interval 1658–1661 is important for RNA-binding; that stretch reads RKKR. Residue 1667–1674 coordinates ATP; that stretch reads LHPGAGKT. The DEAH box motif lies at 1758–1761; the sequence is DEAH. The Helicase C-terminal domain maps to 1820-1987; sequence TGFDWITDYQ…IIPTLFGPER (168 aa). Residue K1862 is modified to N6-acetyllysine; by host. A helical membrane pass occupies residues 2147-2167; it reads LMLVALLGAMTAGIFLFFMQG. Residues 2168–2169 are Lumenal-facing; that stretch reads KG. An intramembrane region (helical) is located at residues 2170–2190; sequence IGKLSVGLIAIAVASGLLWVA. E2191 is a topological domain (lumenal). The chain crosses the membrane as a helical span at residues 2192–2212; sequence IQPQWIAASIILEFFLMVLLI. The Cytoplasmic portion of the chain corresponds to 2213–2225; sequence PEPEKQRTPQDNQ. Residues 2226 to 2246 traverse the membrane as a helical segment; it reads LIYVILAILTIIGLVAANEMG. Residues 2247–2270 are Lumenal-facing; sequence LIEKTKADFGFYQVKTETTILDVD. An intramembrane region (helical) is located at residues 2271–2291; sequence LRPASAWTLYAVATTILTPML. Residues 2292–2301 lie on the Lumenal side of the membrane; that stretch reads RHTIENTSAN. Residues N2297 and N2301 are each glycosylated (N-linked (GlcNAc...) asparagine; by host). The helical intramembrane region spans 2302 to 2322; it reads LSLAAIANQAAVLMGLGKGWP. Topologically, residues 2323–2343 are lumenal; that stretch reads LHRMDLGVPLLAMGCYSQVNP. Residues 2344 to 2364 traverse the membrane as a helical segment; sequence TTLTASLVMLLVHYAIIGPGL. Residues 2365–2409 lie on the Cytoplasmic side of the membrane; the sequence is QAKATREAQKRTAAGIMKNPTVDGITVIDLEPISYDPKFEKQLGQ. Residues 2410–2430 form a helical membrane-spanning segment; sequence VMLLVLCAGQLLLMRTTWAFC. Over 2431-2455 the chain is Lumenal; the sequence is EVLTLATGPVLTLWEGNPGRFWNTT. N2453 carries N-linked (GlcNAc...) asparagine; by host glycosylation. The chain crosses the membrane as a helical span at residues 2456-2476; sequence IAVSTANIFRGSYLAGAGLAF. The Cytoplasmic segment spans residues 2477 to 3387; sequence SLIKNAQTPR…SALSESEGVL (911 aa). Positions 2489–2751 constitute an mRNA cap 0-1 NS5-type MT domain; that stretch reads TGTTGETLGE…DVDLGAGTRS (263 aa). Residue S2543 coordinates S-adenosyl-L-methionine. S2543 carries the phosphoserine modification. K2548 serves as the catalytic For 2'-O-MTase activity. The SUMO-interacting motif motif lies at 2564-2567; the sequence is VVDL. Residues G2573, W2574, T2591, K2592, D2618, and V2619 each contribute to the S-adenosyl-L-methionine site. D2633 (for 2'-O-MTase activity) is an active-site residue. I2634 lines the S-adenosyl-L-methionine pocket. Active-site for 2'-O-MTase activity residues include K2668 and E2704. Position 2706 (Y2706) interacts with S-adenosyl-L-methionine. The Zn(2+) site is built by E2925, H2929, C2934, and C2937. The RdRp catalytic domain occupies 3016-3166; it reads LMYADDTAGW…PLDERFSTSL (151 aa). Zn(2+) contacts are provided by H3200, C3216, and C3335.

The protein in the N-terminal section; belongs to the class I-like SAM-binding methyltransferase superfamily. mRNA cap 0-1 NS5-type methyltransferase family. As to quaternary structure, homodimer. Interacts (via N-terminus) with host EXOC1 (via C-terminus); this interaction results in EXOC1 degradation through the proteasome degradation pathway. In terms of assembly, forms heterodimers with envelope protein E in the endoplasmic reticulum and Golgi. Homodimer; in the endoplasmic reticulum and Golgi. Interacts with protein prM. Interacts with non-structural protein 1. As to quaternary structure, homodimer; Homohexamer when secreted. Interacts with envelope protein E. In terms of assembly, interacts (via N-terminus) with serine protease NS3. Forms a heterodimer with serine protease NS3. May form homooligomers. As to quaternary structure, forms a heterodimer with NS2B. Interacts with NS4B. Interacts with unphosphorylated RNA-directed RNA polymerase NS5; this interaction stimulates RNA-directed RNA polymerase NS5 guanylyltransferase activity. Interacts with host SHFL. In terms of assembly, interacts with host MAVS; this interaction inhibits the synthesis of IFN-beta. Interacts with host SHFL. Interacts with host AUP1; the interaction occurs in the presence of Dengue virus NS4B and induces lipophagy which facilitates production of virus progeny particles. Interacts with serine protease NS3. As to quaternary structure, homodimer. Interacts with host STAT2; this interaction inhibits the phosphorylation of the latter, and, when all viral proteins are present (polyprotein), targets STAT2 for degradation. Interacts with serine protease NS3. Interacts with host PAF1 complex; the interaction may prevent the recruitment of the PAF1 complex to interferon-responsive genes, and thus reduces the immune response. Post-translationally, specific enzymatic cleavages in vivo yield mature proteins. Cleavages in the lumen of endoplasmic reticulum are performed by host signal peptidase, whereas cleavages in the cytoplasmic side are performed by serine protease NS3. Signal cleavage at the 2K-4B site requires a prior NS3 protease-mediated cleavage at the 4A-2K site. In terms of processing, cleaved in post-Golgi vesicles by a host furin, releasing the mature small envelope protein M, and peptide pr. This cleavage is incomplete as up to 30% of viral particles still carry uncleaved prM. N-glycosylated. Post-translationally, N-glycosylated. The excreted form is glycosylated and this is required for efficient secretion of the protein from infected cells. In terms of processing, acetylated by host KAT5. Acetylation modulates NS3 RNA-binding and unwinding activities and plays an important positive role for viral replication. Sumoylation of RNA-directed RNA polymerase NS5 increases NS5 protein stability allowing proper viral RNA replication. Post-translationally, phosphorylated on serines residues. This phosphorylation may trigger NS5 nuclear localization.

It localises to the virion. The protein resides in the host nucleus. The protein localises to the host cytoplasm. Its subcellular location is the host perinuclear region. It is found in the secreted. It localises to the virion membrane. The protein resides in the host endoplasmic reticulum membrane. The protein localises to the host mitochondrion. The catalysed reaction is Selective hydrolysis of -Xaa-Xaa-|-Yaa- bonds in which each of the Xaa can be either Arg or Lys and Yaa can be either Ser or Ala.. It carries out the reaction RNA(n) + a ribonucleoside 5'-triphosphate = RNA(n+1) + diphosphate. The enzyme catalyses a ribonucleoside 5'-triphosphate + H2O = a ribonucleoside 5'-diphosphate + phosphate + H(+). It catalyses the reaction ATP + H2O = ADP + phosphate + H(+). The catalysed reaction is a 5'-end (5'-triphosphoguanosine)-ribonucleoside in mRNA + S-adenosyl-L-methionine = a 5'-end (N(7)-methyl 5'-triphosphoguanosine)-ribonucleoside in mRNA + S-adenosyl-L-homocysteine. It carries out the reaction a 5'-end (N(7)-methyl 5'-triphosphoguanosine)-ribonucleoside in mRNA + S-adenosyl-L-methionine = a 5'-end (N(7)-methyl 5'-triphosphoguanosine)-(2'-O-methyl-ribonucleoside) in mRNA + S-adenosyl-L-homocysteine + H(+). Functionally, plays a role in virus budding by binding to the cell membrane and gathering the viral RNA into a nucleocapsid that forms the core of a mature virus particle. During virus entry, may induce genome penetration into the host cytoplasm after hemifusion induced by the surface proteins. Can migrate to the cell nucleus where it modulates host functions. Overcomes the anti-viral effects of host EXOC1 by sequestering and degrading the latter through the proteasome degradation pathway. Its function is as follows. Inhibits RNA silencing by interfering with host Dicer. In terms of biological role, prevents premature fusion activity of envelope proteins in trans-Golgi by binding to envelope protein E at pH6.0. After virion release in extracellular space, gets dissociated from E dimers. Acts as a chaperone for envelope protein E during intracellular virion assembly by masking and inactivating envelope protein E fusion peptide. prM is the only viral peptide matured by host furin in the trans-Golgi network probably to avoid catastrophic activation of the viral fusion activity in acidic Golgi compartment prior to virion release. prM-E cleavage is inefficient, and many virions are only partially matured. These uncleaved prM would play a role in immune evasion. Functionally, may play a role in virus budding. Exerts cytotoxic effects by activating a mitochondrial apoptotic pathway through M ectodomain. May display a viroporin activity. Its function is as follows. Binds to host cell surface receptor and mediates fusion between viral and cellular membranes. Envelope protein is synthesized in the endoplasmic reticulum in the form of heterodimer with protein prM. They play a role in virion budding in the ER, and the newly formed immature particle is covered with 60 spikes composed of heterodimer between precursor prM and envelope protein E. The virion is transported to the Golgi apparatus where the low pH causes dissociation of PrM-E heterodimers and formation of E homodimers. prM-E cleavage is inefficient, and many virions are only partially matured. These uncleaved prM would play a role in immune evasion. In terms of biological role, involved in immune evasion, pathogenesis and viral replication. Once cleaved off the polyprotein, is targeted to three destinations: the viral replication cycle, the plasma membrane and the extracellular compartment. Essential for viral replication. Required for formation of the replication complex and recruitment of other non-structural proteins to the ER-derived membrane structures. Excreted as a hexameric lipoparticle that plays a role against host immune response. Antagonizing the complement function. Binds to the host macrophages and dendritic cells. Inhibits signal transduction originating from Toll-like receptor 3 (TLR3). Disrupts the host endothelial glycocalyx layer of host pulmonary microvascular endothelial cells, inducing degradation of sialic acid and shedding of heparan sulfate proteoglycans. NS1 induces expression of sialidases, heparanase, and activates cathepsin L, which activates heparanase via enzymatic cleavage. These effects are probably linked to the endothelial hyperpermeability observed in severe dengue disease. Functionally, component of the viral RNA replication complex that functions in virion assembly and antagonizes the host immune response. Its function is as follows. Required cofactor for the serine protease function of NS3. May have membrane-destabilizing activity and form viroporins. In terms of biological role, displays three enzymatic activities: serine protease, NTPase and RNA helicase. NS3 serine protease, in association with NS2B, performs its autocleavage and cleaves the polyprotein at dibasic sites in the cytoplasm: C-prM, NS2A-NS2B, NS2B-NS3, NS3-NS4A, NS4A-2K and NS4B-NS5. NS3 RNA helicase binds RNA and unwinds dsRNA in the 3' to 5' direction. Regulates the ATPase activity of the NS3 helicase activity. NS4A allows NS3 helicase to conserve energy during unwinding. Plays a role in the inhibition of the host innate immune response. Interacts with host MAVS and thereby prevents the interaction between RIGI and MAVS. In turn, IFN-beta production is impaired. Interacts with host AUP1 which mediates induction of lipophagy in host cells and facilitates production of virus progeny particles. Functionally, functions as a signal peptide for NS4B and is required for the interferon antagonism activity of the latter. Its function is as follows. Induces the formation of ER-derived membrane vesicles where the viral replication takes place. Inhibits interferon (IFN)-induced host STAT1 phosphorylation and nuclear translocation, thereby preventing the establishment of cellular antiviral state by blocking the IFN-alpha/beta pathway. In terms of biological role, replicates the viral (+) and (-) RNA genome, and performs the capping of genomes in the cytoplasm. NS5 methylates viral RNA cap at guanine N-7 and ribose 2'-O positions. Besides its role in RNA genome replication, also prevents the establishment of cellular antiviral state by blocking the interferon-alpha/beta (IFN-alpha/beta) signaling pathway. Inhibits host TYK2 and STAT2 phosphorylation, thereby preventing activation of JAK-STAT signaling pathway. May reduce immune responses by preventing the recruitment of the host PAF1 complex to interferon-responsive genes. The polypeptide is Genome polyprotein (Aedes aegypti (Yellowfever mosquito)).